The following is a 269-amino-acid chain: MLLLELPIKCRMCGRFLRQLLAQESQHSTPVGRFLLPMLMGFRLLILVSSGPGVFGNDENEFICHLGQPGCKTICYDVFRPLSPLRFWAFQVILMAVPSAIYVAFTLYHVIGYWEVPGKENKEQETQISKGDHSKDVSGAKSLKLLWAYVAHLGVRLALEGAALGVQYNLYGFKMSSTFICREDPCIGSTTCFQSHPSEKTIFLNIMFGISGACFLFIFLELALLGLGRFWRIYKHKLSFLKKLPTSESSVRSKDTTDELSVVEAKEPF.

Over 1–33 the chain is Extracellular; that stretch reads MLLLELPIKCRMCGRFLRQLLAQESQHSTPVGR. The chain crosses the membrane as a helical span at residues 34-54; it reads FLLPMLMGFRLLILVSSGPGV. Residues 55–86 lie on the Cytoplasmic side of the membrane; the sequence is FGNDENEFICHLGQPGCKTICYDVFRPLSPLR. The helical transmembrane segment at 87-107 threads the bilayer; the sequence is FWAFQVILMAVPSAIYVAFTL. Residues 108 to 145 lie on the Extracellular side of the membrane; the sequence is YHVIGYWEVPGKENKEQETQISKGDHSKDVSGAKSLKL. The chain crosses the membrane as a helical span at residues 146 to 166; sequence LWAYVAHLGVRLALEGAALGV. Residues 167 to 205 are Cytoplasmic-facing; that stretch reads QYNLYGFKMSSTFICREDPCIGSTTCFQSHPSEKTIFLN. The helical transmembrane segment at 206–226 threads the bilayer; it reads IMFGISGACFLFIFLELALLG. Residues 227-269 lie on the Extracellular side of the membrane; that stretch reads LGRFWRIYKHKLSFLKKLPTSESSVRSKDTTDELSVVEAKEPF. Residue Ser-261 is modified to Phosphoserine.

This sequence belongs to the connexin family. Gamma-type subfamily. As to quaternary structure, a connexon is composed of a hexamer of connexins. In terms of tissue distribution, CNS specific. Expression is restricted to brain, spinal cord, and sciatic nerve.

It localises to the cell membrane. It is found in the cell junction. The protein localises to the gap junction. Functionally, one gap junction consists of a cluster of closely packed pairs of transmembrane channels, the connexons, through which materials of low MW diffuse from one cell to a neighboring cell. The polypeptide is Gap junction gamma-3 protein (Gjc3) (Mus musculus (Mouse)).